The primary structure comprises 585 residues: Efflux pump dotC (585 aa).

A compositionally biased stretch (basic and acidic residues) spans 1 to 34 (MSEDHTKADNLSEKDPHSPERSDSSSHEDAHARE). The interval 1-45 (MSEDHTKADNLSEKDPHSPERSDSSSHEDAHAREEEESSDDDGAL) is disordered. Asn10 is a glycosylation site (N-linked (GlcNAc...) asparagine). Acidic residues predominate over residues 35–44 (EEESSDDDGA). The helical transmembrane segment at 51-71 (SLIAIVMIALSLIGLQLAVFL) threads the bilayer. Residue Asn91 is glycosylated (N-linked (GlcNAc...) asparagine). The next 13 membrane-spanning stretches (helical) occupy residues 94–114 (AAYT…TPIW), 132–152 (ALFM…MLIT), 158–178 (GAAG…LFSL), 186–206 (GMIG…GGAF), 214–234 (WCFY…FFFL), 247–267 (FAAI…MFLF), 280–300 (SATV…FGLV), 323–343 (ALLV…YLPL), 353–373 (PILA…SAAA), 385–405 (LIPM…LINF), 414–434 (LIIY…APLV), 449–471 (TATF…QVLY), and 524–544 (SPMW…ILLV). The disordered stretch occupies residues 564–585 (KKAEAERKAERQAKDLEKAQKS).

The protein belongs to the major facilitator superfamily. TCR/Tet family.

The protein resides in the cell membrane. It localises to the vacuole membrane. Efflux pump; part of the gene cluster that mediates the biosynthesis of dothistromin (DOTH), a polyketide toxin very similar in structure to the aflatoxin precursor, versicolorin B. One function of dotC may be to transport early-stage dothistromin biosynthetic intermediates from the cytoplasm into vacuoles, thereby affecting the rate of dothistromin production. This chain is Efflux pump dotC, found in Dothistroma septosporum (Red band needle blight fungus).